Reading from the N-terminus, the 682-residue chain is Protein PilJ (682 aa).

Topologically, residues 1 to 14 (MKKINAGNLFAGMR) are cytoplasmic. The helical transmembrane segment at 15–38 (SSSVIAGLFIVLIVSIVLLFANFA) threads the bilayer. At 39–306 (YLNTQSNHDK…DGFENLAGGR (268 aa)) the chain is on the periplasmic side. The chain crosses the membrane as a helical span at residues 307–333 (SINLFAGYALGALALASIILIGLVMVR). The Cytoplasmic portion of the chain corresponds to 334–682 (ETNRRLAETA…FKLPEGVEQA (349 aa)). In terms of domain architecture, HAMP spans 347-398 (DRNQAAILRLLDEIADLADGDLTVAATVTEDFTGAIADSINYSIDQLRELVE). Positions 403–639 (TAVQVAAAAQ…HISNTMNVIQ (237 aa)) constitute a Methyl-accepting transducer domain.

Belongs to the methyl-accepting chemotaxis (MCP) protein family.

Its subcellular location is the cell inner membrane. May be a part of a signal-transduction system that regulates twitching motility by controlling pilus function (extension and retraction). This Pseudomonas aeruginosa (strain ATCC 15692 / DSM 22644 / CIP 104116 / JCM 14847 / LMG 12228 / 1C / PRS 101 / PAO1) protein is Protein PilJ (pilJ).